The primary structure comprises 47 residues: Lysis protein for colicins E2 and E3 (47 aa).

An N-terminal signal peptide occupies residues 1-19 (MKKITGIILLLLAVIILSA). Cys-20 is lipidated: N-palmitoyl cysteine. Cys-20 is lipidated: S-diacylglycerol cysteine.

Its subcellular location is the cell outer membrane. Its function is as follows. Lysis proteins are required for both colicin release and partial cell lysis. The chain is Lysis protein for colicins E2 and E3 (hic) from Escherichia coli.